Reading from the N-terminus, the 227-residue chain is Probable GTP-binding protein EngB (227 aa).

Positions 13-188 (IGLEVAFAGR…AGVMGNWYEY (176 aa)) constitute an EngB-type G domain. GTP-binding positions include 21–28 (GRSNAGKS), 48–52 (GRTQM), 67–70 (DLPG), 134–137 (TKAD), and 167–169 (FSA). Mg(2+) is bound by residues S28 and T50.

This sequence belongs to the TRAFAC class TrmE-Era-EngA-EngB-Septin-like GTPase superfamily. EngB GTPase family. Requires Mg(2+) as cofactor.

Necessary for normal cell division and for the maintenance of normal septation. This Psychrobacter cryohalolentis (strain ATCC BAA-1226 / DSM 17306 / VKM B-2378 / K5) protein is Probable GTP-binding protein EngB.